The following is a 383-amino-acid chain: Protein KES1 (383 aa).

Positions 317 to 339 (FETASKDKARIENAQRQKRKDEA) are enriched in basic and acidic residues. Positions 317-346 (FETASKDKARIENAQRQKRKDEAAAGTPHQ) are disordered.

This sequence belongs to the OSBP family.

Its function is as follows. Lipid transporter involved in lipid countertransport between the Golgi complex and membranes of the endoplasmic reticulum: specifically exchanges sterol with phosphatidylinositol 4-phosphate (PI4P), delivering sterol to the Golgi in exchange for PI4P, which is degraded by the SAC1 phosphatase in the endoplasmic reticulum. The polypeptide is Protein KES1 (KES1) (Mycosarcoma maydis (Corn smut fungus)).